A 272-amino-acid polypeptide reads, in one-letter code: Hemin import ATP-binding protein HmuV (272 aa).

An ABC transporter domain is found at 2-255 (LNAEHLHVAR…DLIERCYGFR (254 aa)). An ATP-binding site is contributed by 34 to 41 (GRNGAGKS).

It belongs to the ABC transporter superfamily. Heme (hemin) importer (TC 3.A.1.14.5) family. The complex is composed of two ATP-binding proteins (HmuV), two transmembrane proteins (HmuU) and a solute-binding protein (HmuT).

The protein localises to the cell inner membrane. Part of the ABC transporter complex HmuTUV involved in hemin import. Responsible for energy coupling to the transport system. This chain is Hemin import ATP-binding protein HmuV, found in Burkholderia thailandensis (strain ATCC 700388 / DSM 13276 / CCUG 48851 / CIP 106301 / E264).